A 101-amino-acid chain; its full sequence is Small ribosomal subunit protein uS14 (101 aa).

Over residues 1–11 (MAKKSAIETNE) the composition is skewed to basic and acidic residues. The disordered stretch occupies residues 1 to 24 (MAKKSAIETNERRRKLSQSKAAKR). The span at 12 to 24 (RRRKLSQSKAAKR) shows a compositional bias: basic residues.

The protein belongs to the universal ribosomal protein uS14 family. In terms of assembly, part of the 30S ribosomal subunit. Contacts proteins S3 and S10.

In terms of biological role, binds 16S rRNA, required for the assembly of 30S particles and may also be responsible for determining the conformation of the 16S rRNA at the A site. The polypeptide is Small ribosomal subunit protein uS14 (Azorhizobium caulinodans (strain ATCC 43989 / DSM 5975 / JCM 20966 / LMG 6465 / NBRC 14845 / NCIMB 13405 / ORS 571)).